The sequence spans 428 residues: MDHQSLSRRTTKTVMIGHVPVGSSAPVVVQSMTNTDTADAAATVRQVYELWRAGSEIVRITVNSPEAAAQVGAIRRQLDDLGCNVPLVGDFHFNGHRLLAQYPDCAEALAKYRINPGNVGKGSKRDEQFSAMIKAAIDYNKPVRIGVNWGSLDQAKMARMMDENSKRAAPLAADALMREMLIQSALENAAAAEELGLPSDRIIISCKVSAVQDLIKVYRDLGSRCDYPLHLGLTEAGMGSKGIVASTAALSVLLQDGIGDTIRVSLTPEPGESRTKEVVVAQEILQTMGIRSFTPLVTACPGCGRTTSTFFQELAQKIQHYLRDQMPVWRSQYPGVENMSVAVMGCVVNGPGESKLANIGISLPGTGEVPVAPVYVDGEKTVTLKGERIADDFKVIVEEYVRVNYAEGGRLRQQGTGTGLKTIPLKAI.

[4Fe-4S] cluster is bound by residues cysteine 300, cysteine 303, cysteine 346, and glutamate 353.

Belongs to the IspG family. The cofactor is [4Fe-4S] cluster.

It carries out the reaction (2E)-4-hydroxy-3-methylbut-2-enyl diphosphate + oxidized [flavodoxin] + H2O + 2 H(+) = 2-C-methyl-D-erythritol 2,4-cyclic diphosphate + reduced [flavodoxin]. It participates in isoprenoid biosynthesis; isopentenyl diphosphate biosynthesis via DXP pathway; isopentenyl diphosphate from 1-deoxy-D-xylulose 5-phosphate: step 5/6. Its function is as follows. Converts 2C-methyl-D-erythritol 2,4-cyclodiphosphate (ME-2,4cPP) into 1-hydroxy-2-methyl-2-(E)-butenyl 4-diphosphate. The sequence is that of 4-hydroxy-3-methylbut-2-en-1-yl diphosphate synthase (flavodoxin) from Methylobacillus flagellatus (strain ATCC 51484 / DSM 6875 / VKM B-1610 / KT).